Here is a 201-residue protein sequence, read N- to C-terminus: Glycerol-3-phosphate acyltransferase (201 aa).

5 consecutive transmembrane segments (helical) span residues 5–25 (LLGA…FGVV), 55–75 (KMGV…ILLA), 88–108 (WSTA…WLGF), 118–138 (LGIF…GYAV), and 164–184 (TYGV…LIFL).

It belongs to the PlsY family. As to quaternary structure, probably interacts with PlsX.

Its subcellular location is the cell inner membrane. The catalysed reaction is an acyl phosphate + sn-glycerol 3-phosphate = a 1-acyl-sn-glycero-3-phosphate + phosphate. Its pathway is lipid metabolism; phospholipid metabolism. In terms of biological role, catalyzes the transfer of an acyl group from acyl-phosphate (acyl-PO(4)) to glycerol-3-phosphate (G3P) to form lysophosphatidic acid (LPA). This enzyme utilizes acyl-phosphate as fatty acyl donor, but not acyl-CoA or acyl-ACP. This chain is Glycerol-3-phosphate acyltransferase, found in Anaeromyxobacter dehalogenans (strain 2CP-C).